The sequence spans 644 residues: Anti-sigma-I factor RsgI3 (644 aa).

At 1 to 56 (MDNIGVIIKIEGNEAIVMTDDCSFKKVPIKDGMHPGQKILVPNNEVIQKENKSIKR) the chain is on the cytoplasmic side. The 48-residue stretch at 3–50 (NIGVIIKIEGNEAIVMTDDCSFKKVPIKDGMHPGQKILVPNNEVIQKE) folds into the RsgI N-terminal anti-sigma domain. A helical transmembrane segment spans residues 57–77 (ISAVATGIAAVFLMVLSLIWI). Topologically, residues 78 to 644 (NKPGRPDGIY…VVPSKNLFAD (567 aa)) are extracellular. Polar residues predominate over residues 302-328 (PTNTPSISTKPSATPAENPTPKLTQKP). The interval 302 to 359 (PTNTPSISTKPSATPAENPTPKLTQKPTPVPAKTGERTSTTPTPTPAPTVRNGTGSGL) is disordered. PA14 domains follow at residues 354-491 (GTGS…PSSQ) and 502-640 (KDVN…PSKN).

In terms of assembly, interacts (via RsgI N-terminal anti-sigma domain) with SigI3.

It is found in the cell membrane. Functionally, anti-sigma factor for SigI3. Negatively regulates SigI3 activity through direct interaction. Binding of the polysaccharide substrate to the extracellular C-terminal sensing domain of RsgI3 may induce a conformational change in its N-terminal cytoplasmic region, leading to the release and activation of SigI3. This Acetivibrio thermocellus (strain ATCC 27405 / DSM 1237 / JCM 9322 / NBRC 103400 / NCIMB 10682 / NRRL B-4536 / VPI 7372) (Clostridium thermocellum) protein is Anti-sigma-I factor RsgI3.